Reading from the N-terminus, the 486-residue chain is ATP synthase subunit beta (486 aa).

ATP is bound at residue 164–171 (GGAGVGKT).

The protein belongs to the ATPase alpha/beta chains family. F-type ATPases have 2 components, CF(1) - the catalytic core - and CF(0) - the membrane proton channel. CF(1) has five subunits: alpha(3), beta(3), gamma(1), delta(1), epsilon(1). CF(0) has four main subunits: a(1), b(1), b'(1) and c(9-12).

It localises to the cellular thylakoid membrane. The catalysed reaction is ATP + H2O + 4 H(+)(in) = ADP + phosphate + 5 H(+)(out). In terms of biological role, produces ATP from ADP in the presence of a proton gradient across the membrane. The catalytic sites are hosted primarily by the beta subunits. This is ATP synthase subunit beta from Prochlorococcus marinus (strain MIT 9515).